We begin with the raw amino-acid sequence, 679 residues long: Single-strand DNA endonuclease ASTE1 (679 aa).

Positions 351-400 are interaction with SHLD2; sequence TILPTQVENMQQPNAHRISQPIRQIIYGLLLNASPHLDKTSWNALPPQPL. The tract at residues 625-645 is disordered; the sequence is RSNSKKKRQKKQNTSCSKNRG. The segment covering 626-635 has biased composition (basic residues); that stretch reads SNSKKKRQKK.

It belongs to the asteroid family. In terms of assembly, interacts with SHLD1, SHLD2, SHLD3, RIF1 and MAD2L2/REV7.

Structure-specific DNA endonuclease that specifically cleaves single-stranded DNA and 3' overhang DNA. Contributes to the control of DNA double-strand break repair choice by antagonizing BRCA1-dependent homologous recombination (HR) and promoting non-homologous end-joining (NHEJ). Recruited to the single-stranded DNA ends by SHLD2 and cleaves the 3' exposed DNA ends, therefore inhibiting DNA end resection (necessary for HR) and promoting DNA end protection (necessary for NHEJ). The protein is Single-strand DNA endonuclease ASTE1 (ASTE1) of Homo sapiens (Human).